We begin with the raw amino-acid sequence, 164 residues long: Large ribosomal subunit protein uL10 (164 aa).

It belongs to the universal ribosomal protein uL10 family. As to quaternary structure, part of the ribosomal stalk of the 50S ribosomal subunit. The N-terminus interacts with L11 and the large rRNA to form the base of the stalk. The C-terminus forms an elongated spine to which L12 dimers bind in a sequential fashion forming a multimeric L10(L12)X complex.

In terms of biological role, forms part of the ribosomal stalk, playing a central role in the interaction of the ribosome with GTP-bound translation factors. The polypeptide is Large ribosomal subunit protein uL10 (Chromobacterium violaceum (strain ATCC 12472 / DSM 30191 / JCM 1249 / CCUG 213 / NBRC 12614 / NCIMB 9131 / NCTC 9757 / MK)).